We begin with the raw amino-acid sequence, 538 residues long: Chaperonin GroEL (538 aa).

ATP-binding positions include 29–32 (TLGP), 86–90 (DGTTT), G413, 476–478 (NAA), and D492.

The protein belongs to the chaperonin (HSP60) family. As to quaternary structure, forms a cylinder of 14 subunits composed of two heptameric rings stacked back-to-back. Interacts with the co-chaperonin GroES.

It localises to the cytoplasm. The catalysed reaction is ATP + H2O + a folded polypeptide = ADP + phosphate + an unfolded polypeptide.. In terms of biological role, together with its co-chaperonin GroES, plays an essential role in assisting protein folding. The GroEL-GroES system forms a nano-cage that allows encapsulation of the non-native substrate proteins and provides a physical environment optimized to promote and accelerate protein folding. The polypeptide is Chaperonin GroEL (Bacillus sp. (strain PS3)).